The chain runs to 72 residues: Probable protein E5B (72 aa).

In Homo sapiens (Human), this protein is Probable protein E5B.